Here is a 465-residue protein sequence, read N- to C-terminus: Cysteine--tRNA ligase (465 aa).

Cysteine 28 is a binding site for Zn(2+). The 'HIGH' region motif lies at 30–40; that stretch reads PTVYNYIHIGN. Zn(2+)-binding residues include cysteine 208, histidine 233, and glutamate 237. Residues 265-269 carry the 'KMSKS' region motif; that stretch reads KMSKS. Lysine 268 lines the ATP pocket.

This sequence belongs to the class-I aminoacyl-tRNA synthetase family. Monomer. It depends on Zn(2+) as a cofactor.

It is found in the cytoplasm. It carries out the reaction tRNA(Cys) + L-cysteine + ATP = L-cysteinyl-tRNA(Cys) + AMP + diphosphate. The sequence is that of Cysteine--tRNA ligase from Exiguobacterium sibiricum (strain DSM 17290 / CCUG 55495 / CIP 109462 / JCM 13490 / 255-15).